The sequence spans 315 residues: Taste receptor type 2 member 3 (315 aa).

Over 1-5 (MGLTE) the chain is Extracellular. Residues 6–26 (GLFLILSGTQFALGILVNCFI) traverse the membrane as a helical segment. Residues 27-41 (GLVNGSSWFKTKRMS) are Cytoplasmic-facing. The chain crosses the membrane as a helical span at residues 42 to 62 (LSDFIITTLAFLRIILLCIIL). Residues 63–93 (TDSFLIEFSPNAHDSGVIMQIIDVSWTFTNH) are Extracellular-facing. The helical transmembrane segment at 94 to 114 (LSIWLATCLGVLYCLKIASFS) threads the bilayer. Residues 115 to 127 (HPTFLWLKWRVSR) lie on the Cytoplasmic side of the membrane. A helical transmembrane segment spans residues 128 to 148 (VMVWMLLGVLLLSCGSTASLI). The Extracellular segment spans residues 149–185 (NEFKLYSVFRGIEATXNVTEHFRKKRSEYYLIHVLGT). N-linked (GlcNAc...) asparagine glycosylation is present at Asn-165. A helical transmembrane segment spans residues 186-206 (LWYLPPLIVSLAAYFLLIFSL). The Cytoplasmic segment spans residues 207–233 (GRHTRQMLQNGTSSRDPSTEAHKRAIR). Residues 234–254 (IILSSFFLFLLYFLAFLIASF) traverse the membrane as a helical segment. At 255–265 (GNFLPKTKMAK) the chain is on the extracellular side. A helical membrane pass occupies residues 266–286 (MIGEVMTMFYPAGHSFILILG). Residues 287–315 (NSKLKQTFVEMLRCESGHLKPGSKGPIFS) lie on the Cytoplasmic side of the membrane.

It belongs to the G-protein coupled receptor T2R family.

Its subcellular location is the membrane. Its function is as follows. Gustducin-coupled receptor implicated in the perception of bitter compounds in the oral cavity and the gastrointestinal tract. Signals through PLCB2 and the calcium-regulated cation channel TRPM5. This Pongo pygmaeus (Bornean orangutan) protein is Taste receptor type 2 member 3 (TAS2R3).